Here is a 319-residue protein sequence, read N- to C-terminus: Lipoyl synthase (319 aa).

The interval 1-32 (MVVLVDTVSSTPVRPRHPEKAARPDSLSPKKP) is disordered. The span at 16–32 (RHPEKAARPDSLSPKKP) shows a compositional bias: basic and acidic residues. [4Fe-4S] cluster-binding residues include cysteine 61, cysteine 66, cysteine 72, cysteine 87, cysteine 91, cysteine 94, and serine 300. Residues 73 to 289 (WDKKHATFMI…GKTAYAKGFL (217 aa)) form the Radical SAM core domain.

This sequence belongs to the radical SAM superfamily. Lipoyl synthase family. The cofactor is [4Fe-4S] cluster.

It is found in the cytoplasm. The catalysed reaction is [[Fe-S] cluster scaffold protein carrying a second [4Fe-4S](2+) cluster] + N(6)-octanoyl-L-lysyl-[protein] + 2 oxidized [2Fe-2S]-[ferredoxin] + 2 S-adenosyl-L-methionine + 4 H(+) = [[Fe-S] cluster scaffold protein] + N(6)-[(R)-dihydrolipoyl]-L-lysyl-[protein] + 4 Fe(3+) + 2 hydrogen sulfide + 2 5'-deoxyadenosine + 2 L-methionine + 2 reduced [2Fe-2S]-[ferredoxin]. It functions in the pathway protein modification; protein lipoylation via endogenous pathway; protein N(6)-(lipoyl)lysine from octanoyl-[acyl-carrier-protein]: step 2/2. In terms of biological role, catalyzes the radical-mediated insertion of two sulfur atoms into the C-6 and C-8 positions of the octanoyl moiety bound to the lipoyl domains of lipoate-dependent enzymes, thereby converting the octanoylated domains into lipoylated derivatives. This Rhodopseudomonas palustris (strain BisB5) protein is Lipoyl synthase.